Reading from the N-terminus, the 190-residue chain is dCTP deaminase, dUMP-forming (190 aa).

Residues 101–106 (KSSLGR), Asp119, 127–129 (TLE), Gln148, Tyr162, and Gln174 each bind dCTP. The active-site Proton donor/acceptor is Glu129. Residues 161-190 (PYGSSSVGSKYQGQRGPTPSRSYQNFVKND) are disordered. The span at 163 to 190 (GSSSVGSKYQGQRGPTPSRSYQNFVKND) shows a compositional bias: polar residues.

Belongs to the dCTP deaminase family. As to quaternary structure, homotrimer.

The enzyme catalyses dCTP + 2 H2O = dUMP + NH4(+) + diphosphate. It functions in the pathway pyrimidine metabolism; dUMP biosynthesis; dUMP from dCTP: step 1/1. Functionally, bifunctional enzyme that catalyzes both the deamination of dCTP to dUTP and the hydrolysis of dUTP to dUMP without releasing the toxic dUTP intermediate. The protein is dCTP deaminase, dUMP-forming of Mycolicibacterium vanbaalenii (strain DSM 7251 / JCM 13017 / BCRC 16820 / KCTC 9966 / NRRL B-24157 / PYR-1) (Mycobacterium vanbaalenii).